The sequence spans 430 residues: MDAVNENGKRAMKDDSHGNSTSPKRRKSRHISALILARGGSKGIPLKNIKMLAGVPLIGWVIRAAVDSNVFNSVWVSTDHEEIAKVALAWGAKVHKRSPEVSQDSSSSLDTIREFSRQHREVDVICNIQATSPCLHPKHLTEAVELITKQGYDSVFSVVRRHNFRWKEVEKGGDCSTEPMNLNPACRPRRQDWSGELCENGSFYFAKKELIEQGLLQGGKKTYYEMKPEYSVDIDVDIDWPVAEQRVLRFGYFGKDKPEVVRLLLCNVSGCLTDGQIYTSASGEEMVSINIRDQIGISMLKKEGVKVILLETYPIAKALAVRLSERMGCPLLHHMDDKLKEVERIMVEEKLEWKEVAYLGNDEADVKCLELAGLSGVPVDAPTVALNHTKYTCHNAAGHGAVREFAEHILLLKKKAKSQMEQDRICRDAF.

Residues 1-29 form a disordered region; sequence MDAVNENGKRAMKDDSHGNSTSPKRRKSR. A compositionally biased stretch (basic and acidic residues) spans 7–17; the sequence is NGKRAMKDDSH. The Bipartite nuclear localization signal signature appears at 9–27; sequence KRAMKDDSHGNSTSPKRRK. Substrate is bound by residues arginine 38, asparagine 48, arginine 97, serine 106, serine 108, and glutamine 129. Arginine 187 is a catalytic residue.

The protein belongs to the CMP-NeuNAc synthase family. As to quaternary structure, homotetramer.

Its subcellular location is the nucleus. The enzyme catalyses an N-acylneuraminate + CTP = a CMP-N-acyl-beta-neuraminate + diphosphate. It participates in amino-sugar metabolism; N-acetylneuraminate metabolism. In terms of biological role, catalyzes the activation of N-acetylneuraminic acid (NeuNAc) to cytidine 5'-monophosphate N-acetylneuraminic acid (CMP-NeuNAc), a substrate required for the addition of sialic acid. Also has activity towards N-glycolylneuraminic acid (Neu5Gc). Has weak activity towards 2-keto-3-deoxy-D-glycero-D-galacto-nononic acid (KDN). The polypeptide is N-acylneuraminate cytidylyltransferase A (Danio rerio (Zebrafish)).